Here is a 387-residue protein sequence, read N- to C-terminus: MENSAPLVAIVAGEASGDQHAAHLIREVKKIAPGVRFGGIAGPQMRAAGVEPLFDSSRLAVVGLVEVLSHLNEIYGAMQKMRHFLEEKHPDLLILVDYPEFNLRLAKRAKTLGIKVLYYISPQVWAWRQYRVHQIGQVVDMMAVVLPFEVPFYEQAGVPVNFVGHPLQHEVKSKFNRNEAVVEFGFNPCCKTLGLLPGSRHSEIKRLLPVLLEAAERIYSEEPEIQYLLPLAATLKEIDLAPYLKGYRLPLRVIPDRSYDVMAACDAMVAASGTVTLEAALMGVPLVVIYKMNSLSYWMGRLLIKVDHIALCNIIAGEGVAPELIQQDASPERIALEALNLLRDKERRQTMQQKFYAIKHKLGAGAQRTIAELTVAMLEGENLGRAS.

The protein belongs to the LpxB family.

The enzyme catalyses a lipid X + a UDP-2-N,3-O-bis[(3R)-3-hydroxyacyl]-alpha-D-glucosamine = a lipid A disaccharide + UDP + H(+). It functions in the pathway bacterial outer membrane biogenesis; LPS lipid A biosynthesis. Functionally, condensation of UDP-2,3-diacylglucosamine and 2,3-diacylglucosamine-1-phosphate to form lipid A disaccharide, a precursor of lipid A, a phosphorylated glycolipid that anchors the lipopolysaccharide to the outer membrane of the cell. This chain is Lipid-A-disaccharide synthase, found in Nitrosococcus oceani (strain ATCC 19707 / BCRC 17464 / JCM 30415 / NCIMB 11848 / C-107).